A 366-amino-acid chain; its full sequence is Geranylgeranyl pyrophosphate synthase, chloroplastic/chromoplastic (366 aa).

Residues Lys44–Ser65 form a disordered region. Lys112, Arg115, and His144 together coordinate isopentenyl diphosphate. Mg(2+)-binding residues include Asp151 and Asp157. Arg162 provides a ligand contact to dimethylallyl diphosphate. Arg163 provides a ligand contact to isopentenyl diphosphate. Dimethylallyl diphosphate contacts are provided by Lys251, Thr252, Gln289, Lys306, and Lys316.

The protein belongs to the FPP/GGPP synthase family. In terms of assembly, dimer. It depends on Mg(2+) as a cofactor.

It is found in the plastid. Its subcellular location is the chloroplast stroma. The protein resides in the chromoplast. The catalysed reaction is isopentenyl diphosphate + dimethylallyl diphosphate = (2E)-geranyl diphosphate + diphosphate. It carries out the reaction isopentenyl diphosphate + (2E)-geranyl diphosphate = (2E,6E)-farnesyl diphosphate + diphosphate. The enzyme catalyses isopentenyl diphosphate + (2E,6E)-farnesyl diphosphate = (2E,6E,10E)-geranylgeranyl diphosphate + diphosphate. It functions in the pathway isoprenoid biosynthesis; farnesyl diphosphate biosynthesis; farnesyl diphosphate from geranyl diphosphate and isopentenyl diphosphate: step 1/1. The protein operates within isoprenoid biosynthesis; geranyl diphosphate biosynthesis; geranyl diphosphate from dimethylallyl diphosphate and isopentenyl diphosphate: step 1/1. It participates in isoprenoid biosynthesis; geranylgeranyl diphosphate biosynthesis; geranylgeranyl diphosphate from farnesyl diphosphate and isopentenyl diphosphate: step 1/1. Catalyzes the trans-addition of the three molecules of IPP onto DMAPP to form geranylgeranyl pyrophosphate. This chain is Geranylgeranyl pyrophosphate synthase, chloroplastic/chromoplastic (GGPS1), found in Sinapis alba (White mustard).